A 327-amino-acid chain; its full sequence is Ribosomal RNA small subunit methyltransferase H (327 aa).

Residues 36-38 (GGH), aspartate 61, phenylalanine 88, aspartate 114, and glutamine 121 each bind S-adenosyl-L-methionine.

The protein belongs to the methyltransferase superfamily. RsmH family.

It is found in the cytoplasm. It carries out the reaction cytidine(1402) in 16S rRNA + S-adenosyl-L-methionine = N(4)-methylcytidine(1402) in 16S rRNA + S-adenosyl-L-homocysteine + H(+). Specifically methylates the N4 position of cytidine in position 1402 (C1402) of 16S rRNA. The chain is Ribosomal RNA small subunit methyltransferase H from Chlorobium luteolum (strain DSM 273 / BCRC 81028 / 2530) (Pelodictyon luteolum).